Consider the following 721-residue polypeptide: Cytosolic carboxypeptidase 2 (721 aa).

Residues 43 to 71 (TASDMINSSSPSESSDSNLEEEQEESKPC) form a disordered region. Residues 50-59 (SSSPSESSDS) are compositionally biased toward low complexity. Residues 334 to 605 (YPYTYSKLQH…CFCDTLLDFC (272 aa)) form the Peptidase M14 domain. Zn(2+)-binding residues include histidine 400, glutamate 403, and histidine 496. Glutamate 569 (proton donor/acceptor) is an active-site residue. The interval 645 to 721 (DIESSTSGSN…TQHGDTEDQS (77 aa)) is disordered. Over residues 647–660 (ESSTSGSNSTESDG) the composition is skewed to low complexity. A compositionally biased stretch (basic residues) spans 672–688 (GKKKLLRSRKERNRLRQ). Positions 703–714 (YSCQTLNATTQH) are enriched in polar residues.

The protein belongs to the peptidase M14 family. The cofactor is Zn(2+).

The protein resides in the cytoplasm. It is found in the cytosol. It localises to the cytoskeleton. Its subcellular location is the microtubule organizing center. The protein localises to the centrosome. The protein resides in the centriole. It is found in the cilium basal body. It catalyses the reaction (L-glutamyl)(n+1)-gamma-L-glutamyl-L-glutamyl-[protein] + H2O = (L-glutamyl)(n)-gamma-L-glutamyl-L-glutamyl-[protein] + L-glutamate. In terms of biological role, metallocarboxypeptidase that mediates deglutamylation of target proteins. Catalyzes the deglutamylation of polyglutamate side chains generated by post-translational polyglutamylation in proteins such as tubulins. Also removes gene-encoded polyglutamates from the carboxy-terminus of target proteins such as MYLK. Does not show detyrosinase or deglycylase activities from the carboxy-terminus of tubulin. Metallocarboxypeptidase that mediates deglutamylation of tubulin and non-tubulin target proteins. Catalyzes the removal of polyglutamate side chains present on the gamma-carboxyl group of glutamate residues within the C-terminal tail of tubulin protein. Specifically cleaves tubulin long-side-chains, while it is not able to remove the branching point glutamate. Also catalyzes the removal of polyglutamate residues from the carboxy-terminus of non-tubulin proteins. This is Cytosolic carboxypeptidase 2 (zte25) from Danio rerio (Zebrafish).